We begin with the raw amino-acid sequence, 410 residues long: Elongation factor Tu (410 aa).

Residues 10-214 (KPHVNIGTIG…EVDAYIPTPE (205 aa)) enclose the tr-type G domain. A G1 region spans residues 19-26 (GHVDHGKT). 19-26 (GHVDHGKT) contributes to the GTP binding site. Residue Thr-26 participates in Mg(2+) binding. A G2 region spans residues 60-64 (GITIN). Residues 81-84 (DCPG) are G3. GTP is bound by residues 81-85 (DCPGH) and 136-139 (NKAD). A G4 region spans residues 136–139 (NKAD). Residues 174–176 (SAL) form a G5 region.

The protein belongs to the TRAFAC class translation factor GTPase superfamily. Classic translation factor GTPase family. EF-Tu/EF-1A subfamily. As to quaternary structure, monomer.

Its subcellular location is the cytoplasm. It catalyses the reaction GTP + H2O = GDP + phosphate + H(+). GTP hydrolase that promotes the GTP-dependent binding of aminoacyl-tRNA to the A-site of ribosomes during protein biosynthesis. The sequence is that of Elongation factor Tu from Arthrospira platensis (Spirulina platensis).